We begin with the raw amino-acid sequence, 294 residues long: Cytidine deaminase (294 aa).

CMP/dCMP-type deaminase domains lie at 48-168 (DEDA…FGPK) and 186-294 (LTGN…VLLG). Substrate is bound at residue 89-91 (NME). His-102 serves as a coordination point for Zn(2+). The Proton donor role is filled by Glu-104. Cys-129 and Cys-132 together coordinate Zn(2+).

Belongs to the cytidine and deoxycytidylate deaminase family. In terms of assembly, homodimer. It depends on Zn(2+) as a cofactor.

It carries out the reaction cytidine + H2O + H(+) = uridine + NH4(+). It catalyses the reaction 2'-deoxycytidine + H2O + H(+) = 2'-deoxyuridine + NH4(+). In terms of biological role, this enzyme scavenges exogenous and endogenous cytidine and 2'-deoxycytidine for UMP synthesis. The sequence is that of Cytidine deaminase from Salmonella typhi.